We begin with the raw amino-acid sequence, 678 residues long: NADPH--cytochrome P450 reductase (678 aa).

Glycine 2 carries the post-translational modification N-acetylglycine. Residues 2-21 (GDSHVDTGATSTEAVAEEVS) are Lumenal-facing. Residues 22–42 (LFSMTDMILLSVLVGFLTYFF) form a helical membrane-spanning segment. Over 43-678 (LFRKKKEEIP…KGRYSLDVWS (636 aa)) the chain is Cytoplasmic. The residue at position 63 (serine 63) is a Phosphoserine. In terms of domain architecture, Flavodoxin-like spans 80-224 (IIVFYGSQTG…DFITWREQFW (145 aa)). Residues 86-91 (SQTGTA), 138-141 (ATYG), 173-182 (LGNKTYEHFN), and aspartate 208 contribute to the FMN site. In terms of domain architecture, FAD-binding FR-type spans 279-521 (KNPFLAAVTT…FVRKSQFRLP (243 aa)). Arginine 298 contacts NADP(+). FAD contacts are provided by residues arginine 424, 454–457 (RYYS), 472–474 (CAV), tyrosine 478, and 488–491 (GVAT). NADP(+)-binding positions include threonine 535, 596–597 (SR), 602–606 (KVYVQ), and aspartate 639. Tryptophan 677 is an FAD binding site.

It belongs to the NADPH--cytochrome P450 reductase family. The protein in the N-terminal section; belongs to the flavodoxin family. This sequence in the C-terminal section; belongs to the flavoprotein pyridine nucleotide cytochrome reductase family. The cofactor is FAD. FMN is required as a cofactor.

The protein resides in the endoplasmic reticulum membrane. The enzyme catalyses 2 oxidized [cytochrome P450] + NADPH = 2 reduced [cytochrome P450] + NADP(+) + H(+). Its function is as follows. This enzyme is required for electron transfer from NADP to cytochrome P450 in microsomes. It can also provide electron transfer to heme oxygenase and cytochrome B5. This is NADPH--cytochrome P450 reductase from Cavia porcellus (Guinea pig).